Here is an 804-residue protein sequence, read N- to C-terminus: uncharacterized protein (804 aa).

Helical transmembrane passes span 15–35 (LLIV…LGNI), 243–263 (FLLL…AVAM), 301–321 (LSAV…MVLL), 333–353 (SLWP…LVGL), 381–401 (FYLP…MGGS), 403–423 (LLWA…VLGW), 453–473 (TLSQ…LLVL), 680–700 (ALEV…LAQV), 734–754 (MLGF…LAVL), and 769–789 (LWIV…GWLG).

The protein belongs to the ABC-4 integral membrane protein family.

It is found in the cell membrane. This is an uncharacterized protein from Escherichia coli (strain K12).